The sequence spans 118 residues: Ribosome-binding factor A (118 aa).

Belongs to the RbfA family. As to quaternary structure, monomer. Binds 30S ribosomal subunits, but not 50S ribosomal subunits or 70S ribosomes.

It is found in the cytoplasm. Functionally, one of several proteins that assist in the late maturation steps of the functional core of the 30S ribosomal subunit. Associates with free 30S ribosomal subunits (but not with 30S subunits that are part of 70S ribosomes or polysomes). Required for efficient processing of 16S rRNA. May interact with the 5'-terminal helix region of 16S rRNA. The sequence is that of Ribosome-binding factor A from Bacillus thuringiensis (strain Al Hakam).